The chain runs to 508 residues: Steroid 17-alpha-hydroxylase/17,20 lyase (508 aa).

Cys442 provides a ligand contact to heme.

Belongs to the cytochrome P450 family. Requires heme as cofactor.

It localises to the endoplasmic reticulum membrane. The protein resides in the microsome membrane. The catalysed reaction is a C21-steroid + reduced [NADPH--hemoprotein reductase] + O2 = a 17alpha-hydroxy-C21-steroid + oxidized [NADPH--hemoprotein reductase] + H2O + H(+). It catalyses the reaction progesterone + reduced [NADPH--hemoprotein reductase] + O2 = 17alpha-hydroxyprogesterone + oxidized [NADPH--hemoprotein reductase] + H2O + H(+). It carries out the reaction pregnenolone + reduced [NADPH--hemoprotein reductase] + O2 = 17alpha-hydroxypregnenolone + oxidized [NADPH--hemoprotein reductase] + H2O + H(+). The enzyme catalyses 17alpha-hydroxyprogesterone + reduced [NADPH--hemoprotein reductase] + O2 = androst-4-ene-3,17-dione + acetate + oxidized [NADPH--hemoprotein reductase] + H2O + 2 H(+). The catalysed reaction is 17alpha-hydroxyprogesterone + reduced [NADPH--hemoprotein reductase] + O2 = 16alpha,17alpha-dihydroxyprogesterone + oxidized [NADPH--hemoprotein reductase] + H2O + H(+). It catalyses the reaction 16alpha,17alpha-dihydroxyprogesterone + reduced [NADPH--hemoprotein reductase] + O2 = 6beta,16alpha,17alpha-trihydroxyprogesterone + oxidized [NADPH--hemoprotein reductase] + H2O + H(+). It carries out the reaction 17alpha-hydroxypregnenolone + reduced [NADPH--hemoprotein reductase] + O2 = 3beta-hydroxyandrost-5-en-17-one + acetate + oxidized [NADPH--hemoprotein reductase] + H2O + 2 H(+). The enzyme catalyses 16alpha,17alpha-dihydroxypregnenolone + reduced [NADPH--hemoprotein reductase] + O2 = 3beta,16alpha-dihydroxy-androst-5-en-17-one + acetate + oxidized [NADPH--hemoprotein reductase] + H2O + 2 H(+). The catalysed reaction is 3beta-hydroxyandrost-5-en-17-one + reduced [NADPH--hemoprotein reductase] + O2 = 3beta,16alpha-dihydroxy-androst-5-en-17-one + oxidized [NADPH--hemoprotein reductase] + H2O + H(+). It catalyses the reaction androst-4-ene-3,17-dione + reduced [NADPH--hemoprotein reductase] + O2 = 16alpha-hydroxyandrost-4-ene-3,17-dione + oxidized [NADPH--hemoprotein reductase] + H2O + H(+). Its pathway is steroid hormone biosynthesis. It participates in steroid biosynthesis; glucocorticoid biosynthesis. Its activity is regulated as follows. Regulated predominantly by intracellular cAMP levels. The 17,20-lyase activity is stimulated by cytochrome b5, which acts as an allosteric effector increasing the Vmax of the lyase activity. A cytochrome P450 monooxygenase involved in corticoid and androgen biosynthesis. Catalyzes 17-alpha hydroxylation of C21 steroids, which is common for both pathways. A second oxidative step, required only for androgen synthesis, involves an acyl-carbon cleavage. The 17-alpha hydroxy intermediates, as part of adrenal glucocorticoids biosynthesis pathway, are precursors of cortisol. Hydroxylates steroid hormones, pregnenolone and progesterone to form 17-alpha hydroxy metabolites, followed by the cleavage of the C17-C20 bond to form C19 steroids, dehydroepiandrosterone (DHEA) and androstenedione. Has 16-alpha hydroxylase activity. Catalyzes 16-alpha hydroxylation of 17-alpha hydroxy pregnenolone, followed by the cleavage of the C17-C20 bond to form 16-alpha-hydroxy DHEA. Also 16-alpha hydroxylates androgens, relevant for estriol synthesis. Mechanistically, uses molecular oxygen inserting one oxygen atom into a substrate, and reducing the second into a water molecule, with two electrons provided by NADPH via cytochrome P450 reductase (CPR; NADPH-ferrihemoprotein reductase). The sequence is that of Steroid 17-alpha-hydroxylase/17,20 lyase (CYP17A1) from Equus caballus (Horse).